A 432-amino-acid chain; its full sequence is Enolase (432 aa).

Residue Q166 coordinates (2R)-2-phosphoglycerate. Residue E208 is the Proton donor of the active site. Mg(2+)-binding residues include D245, E291, and D318. K343, R372, S373, and K394 together coordinate (2R)-2-phosphoglycerate. Residue K343 is the Proton acceptor of the active site.

It belongs to the enolase family. Mg(2+) serves as cofactor.

It is found in the cytoplasm. The protein resides in the secreted. Its subcellular location is the cell surface. It catalyses the reaction (2R)-2-phosphoglycerate = phosphoenolpyruvate + H2O. It participates in carbohydrate degradation; glycolysis; pyruvate from D-glyceraldehyde 3-phosphate: step 4/5. Its function is as follows. Catalyzes the reversible conversion of 2-phosphoglycerate (2-PG) into phosphoenolpyruvate (PEP). It is essential for the degradation of carbohydrates via glycolysis. This Leptospira interrogans serogroup Icterohaemorrhagiae serovar copenhageni (strain Fiocruz L1-130) protein is Enolase.